Here is a 61-residue protein sequence, read N- to C-terminus: Metallothionein-2E (61 aa).

The residue at position 1 (Met-1) is an N-acetylmethionine. The interval 1-29 is beta; it reads MDPNCSCATRDSCACASSCKCKECKCTSC. Positions 5, 7, 13, 15, 19, 21, 24, 26, 29, 33, 34, 36, 37, 41, 44, 48, 50, 57, 59, and 60 each coordinate a divalent metal cation. The alpha stretch occupies residues 30–61; that stretch reads KKSCCSCCPAGCTKCAQGCICKGALDKCSCCA.

This sequence belongs to the metallothionein superfamily. Type 1 family. As to quaternary structure, monomer.

Functionally, metallothioneins have a high content of cysteine residues that bind various heavy metals; these proteins are transcriptionally regulated by both heavy metals and glucocorticoids. In Oryctolagus cuniculus (Rabbit), this protein is Metallothionein-2E.